Reading from the N-terminus, the 314-residue chain is SERTA domain-containing protein 2 (314 aa).

The region spanning 33–80 is the SERTA domain; the sequence is YTLQRQTIFNISLMKLYNHRPLTEPSLQKTVLINNMLRRIQEELKQEG. 2 disordered regions span residues 77–119 and 181–222; these read KQEG…HPCD and PTST…SKLM. Residues 87-97 are compositionally biased toward polar residues; that stretch reads TPSSQPTTEPS. Residues 182-193 are compositionally biased toward low complexity; sequence TSTSTEAATAAT. Basic and acidic residues predominate over residues 210 to 221; it reads GPQESRADDSKL. Positions 235 to 311 are required for transactivation activity; sequence TGFLTDLTLD…TELDHIMEVL (77 aa). Positions 238 to 243 match the Nuclear export signal (NES) motif; it reads LTDLTL.

Interacts with XPO1; which mediates nuclear export. Interacts with TFDP1; modulates transactivation activity of TFDP1/E2F complexes. In terms of processing, polyubiquitinated, which promotes proteasomal degradation. Expressed in adipose tissue.

Its subcellular location is the nucleus. It is found in the cytoplasm. In terms of biological role, acts at E2F-responsive promoters as coregulator to integrate signals provided by PHD- and/or bromodomain-containing transcription factors. May act as coactivator as well as corepressor of E2F1-TFDP1 and E2F4-TFDP1 complexes on E2F consensus binding sites, which would activate or inhibit E2F-target genes expression. Modulates fat storage by down-regulating the expression of key genes involved in adipocyte lipolysis, thermogenesis and oxidative metabolism. This is SERTA domain-containing protein 2 (SERTAD2) from Homo sapiens (Human).